The primary structure comprises 527 residues: MSSDGERDMARKPIRRALISVYDKTGLIDLAQGLNAAGVDIVSTGSTAKAIADQGIAVTPVEELTGFPEVLDGRVKTLHPRVHAGLLADLRKPEHAAALEQLGIEAFELVVVNLYPFSQTVKSGATVDECVEQIDIGGSSMVRAAAKNHPSVAVVTDPLGYVGVLAAVQGGGFTLAERKMLASMAFQHIAEYEIAVASWMQSTLAPEQPPTAFPQWFGRSWRRSAILRYGENPHQQAALYSDPSACPGLAQAEQLHGKNMSYNNFTDADAAWRAAFDHEQSCVAIIKHANPCGIAISSLSVADAHRKAHECDPLSAYGGVIAANTEVSLEMAEYVSTIFTEVIVAPSYAPGAVDVLSCKKNVRVLVASAPLRGGSELRPVSGGLLIQQPDQLDTAGDNPANWTLATGSPAGPATLTDLVFAWRACRAVKSNAIVIAADGATIGVGMGQVNRVDAARLAVERGGDRVRGAVVASDAFFPFADGLQTLAAAGVTAIVHPGGSVRDAEVTAAATKAGVTLYLTGVRHFVH.

Residues 9–156 (MARKPIRRAL…KNHPSVAVVT (148 aa)) form the MGS-like domain.

This sequence belongs to the PurH family.

It catalyses the reaction (6R)-10-formyltetrahydrofolate + 5-amino-1-(5-phospho-beta-D-ribosyl)imidazole-4-carboxamide = 5-formamido-1-(5-phospho-D-ribosyl)imidazole-4-carboxamide + (6S)-5,6,7,8-tetrahydrofolate. The enzyme catalyses IMP + H2O = 5-formamido-1-(5-phospho-D-ribosyl)imidazole-4-carboxamide. It functions in the pathway purine metabolism; IMP biosynthesis via de novo pathway; 5-formamido-1-(5-phospho-D-ribosyl)imidazole-4-carboxamide from 5-amino-1-(5-phospho-D-ribosyl)imidazole-4-carboxamide (10-formyl THF route): step 1/1. The protein operates within purine metabolism; IMP biosynthesis via de novo pathway; IMP from 5-formamido-1-(5-phospho-D-ribosyl)imidazole-4-carboxamide: step 1/1. In Mycobacterium leprae (strain Br4923), this protein is Bifunctional purine biosynthesis protein PurH.